A 202-amino-acid polypeptide reads, in one-letter code: MLKFSMEFCYPQPDVKTLIVGTLGPKETSSEQTLNYLITQWQAEQISVTSHLFDTFTELKEALLQDRVDLALVPHAYERVNDFYMEPSLKLGFVFTYPTPIYGLAKRKNEELVWENCTLVTHPAPFPLLPYLLPGYPHQKNIKVEFVNSTSAAAIQVKQGLADLAITNENALKENDLEFIAEYGKIEMSWSIFHKKGTVHRE.

The protein belongs to the prephenate decarboxylase family.

It catalyses the reaction prephenate + H(+) = 3-[(4R)-4-hydroxycyclohexa-1,5-dien-1-yl]-2-oxopropanoate + CO2. Its function is as follows. In vivo, involved in the biosynthesis of 2-carboxy-6-hydroxyoctahydroindole (Choi) present in the nonribosomal glycopeptides aeruginoside 126A and B. AerD is an unusual prephenate decarboxylase that avoids the typical aromatization of the cyclohexadienol ring of prephenate. AerD catalyzes the protonation at C8 followed by decarboxylation to produce the dihydro-4-hydroxyphenylpyruvate regioisomer A258 (H2HPP A258)(3-(4-hydroxycyclohexa- 1,5-dienyl)-2-oxopropanoic acid), which is able to undergo a nonenzymatic isomerization to produce dihydro-4-hydroxyphenylpyruvate regioisomer A295 (H2HPP A295)(3-(4-hydroxycyclohex-2-enylidene)-2-oxopropanoic acid). The chain is Prephenate decarboxylase from Planktothrix agardhii (strain NIVA-CYA 126/8).